Consider the following 157-residue polypeptide: MKESILAVLLYLFEYYFSENADLVRDRDSLQNSLIQVGFSPAEINKAFEWLDALAANRPTLTNPRVNGPVRVLHGPELDKLDVESRGFLLFLEQQGILNTEQRELVLDRAMALDQEELDLDDMKWVVLMVLFNQPGAEAAYAWMETQMFGNEPEQLH.

It belongs to the Smg family.

The sequence is that of Protein Smg homolog from Xylella fastidiosa (strain M23).